The following is a 342-amino-acid chain: Signaling lymphocytic activation molecule (342 aa).

The N-terminal stretch at 1–26 (MDSRGFLSLRCLLVLALASKLSCGTG) is a signal peptide. Topologically, residues 27 to 237 (ESLMNCPEVP…CRPESSVPRQ (211 aa)) are extracellular. Residues 29-138 (LMNCPEVPGK…QHFCLQLKLY (110 aa)) enclose the Ig-like V-type domain. N-linked (GlcNAc...) asparagine glycans are attached at residues Asn57, Asn102, Asn125, Asn150, Asn157, Asn189, and Asn217. In terms of domain architecture, Ig-like C2-type spans 144–223 (PEIKVLNWTQ…PVSNRSWSFN (80 aa)). Intrachain disulfides connect Cys158/Cys228 and Cys164/Cys209. The helical transmembrane segment at 238 to 261 (WRLYAGLFLGGIVGVILIFEVVLL) threads the bilayer. The Cytoplasmic portion of the chain corresponds to 262–342 (LLRRRGKTNH…VYASVTFPES (81 aa)). An ITSM 1 motif is present at residues 282–287 (TIYAQV). 3 positions are modified to phosphotyrosine; by FYN: Tyr284, Tyr310, and Tyr334. The SH2-binding motif lies at 310 to 315 (YVAATE). Residues 332-337 (TVYASV) carry the ITSM 2 motif.

In terms of assembly, interacts (via cytoplasmic domain) with SH2D1A and SH2D1B; SH2D1A mediates association with FYN. Interacts (via cytoplasmic domain phosphorylated on tyrosine residues) with INPP5D and PTPN11; presence of SH2D1A facilitates binding to INPP5D. Interacts with MAP4K1. Interacts with PIK3C3, BECN1 and UVRAG; indicative for an association with PI3K complex II (PI3KC3-C2). Interacts with canine distemper virus HN protein; suggesting that it may serve as a receptor. In terms of processing, phosphorylated on tyrosine residues by FYN.

The protein resides in the cell membrane. In terms of biological role, self-ligand receptor of the signaling lymphocytic activation molecule (SLAM) family. SLAM receptors triggered by homo- or heterotypic cell-cell interactions are modulating the activation and differentiation of a wide variety of immune cells and thus are involved in the regulation and interconnection of both innate and adaptive immune response. Activities are controlled by presence or absence of small cytoplasmic adapter proteins, SH2D1A/SAP and/or SH2D1B/EAT-2. SLAMF1-induced signal-transduction events in T-lymphocytes are different from those in B-cells. Two modes of SLAMF1 signaling seem to exist: one depending on SH2D1A (and perhaps SH2D1B) and another in which protein-tyrosine phosphatase 2C (PTPN11)-dependent signal transduction operates. Initially it has been proposed that association with SH2D1A prevents binding to inhibitory effectors including INPP5D/SHIP1 and PTPN11/SHP-2. However, signaling is also regulated by SH2D1A which can simultaneously interact with and recruit FYN which subsequently phosphorylates and activates SLAMF1. Mediates IL-2-independent proliferation of activated T cells during immune responses and induces IFN-gamma production. Downstreaming signaling involves INPP5D/SHIP1, DOK1 and DOK2 leading to inhibited IFN-gamma production in T-cells, and PRKCQ, BCL10 and NFKB1 leading to increased T-cell activation and Th2 cytokine production. Promotes T-cell receptor-induced IL-4 secretion by CD4(+) cells. Inhibits antigen receptor-mediated production of IFN-gamma, but not IL-2, in CD4(-)/CD8(-) T-cells. Required for IL-4 production by germinal centers T follicular helper (T(Fh))cells. May inhibit CD40-induced signal transduction in monocyte-derived dendritic cells. May play a role in allergic responses and may regulate allergen-induced Th2 cytokine and Th1 cytokine secretion. In conjunction with SLAMF6 controls the transition between positive selection and the subsequent expansion and differentiation of the thymocytic natural killer T (NKT) cell lineage. Involved in the peripheral differentiation of indifferent natural killer T (iNKT) cells toward a regulatory NKT2 type. In macrophages involved in down-regulation of IL-12, TNF-alpha and nitric oxide in response to lipopolysaccharide (LPS). In B-cells activates the ERK signaling pathway independently of SH2D1A but implicating both, SYK and INPP5D, and activates Akt signaling dependent on SYK and SH2D1A. In conjunction with SLAMF5 and SLAMF6 may be a negative regulator of the humoral immune response. This is Signaling lymphocytic activation molecule (SLAMF1) from Canis lupus familiaris (Dog).